Reading from the N-terminus, the 152-residue chain is Maintenance of carboxysome distribution protein B (152 aa).

As to quaternary structure, self-associates, interacts with McdA probably via the C-terminus of both proteins. Homohexamerizes. Probably a trimer of dimers. Interacts with most of the shell components of the carboxysome (CcmK2, CcmK3, CcmK4, CcmL and CcmO, but not CcmP) via its C-terminus.

Its subcellular location is the carboxysome. Its function is as follows. McdA and McdB together mediate carboxysome (Cb) spacing, size, ultrastructure and probably inheritance in the cell. Together they prevent Cb aggregation. McdA is an ATPase that forms dynamic gradients on the nucleoid in response to adapter protein McdB, which associates with carboxysomes. The interplay between McdA gradients on the nucleoid and McdB-bound carboxysomes result in the equal spacing of Cbs along the cell length. McdB may have an additional function in cell divison. Stimulates the ATPase activity of McdA, causing McdA to be released from DNA. Overexpression leads to loss of McdA oscillation and formation of large Cb aggregates which colocalize with McdB, as well as diffuse McdB staining in the cytoplasm. Undergoes liquid-liquid phase separation between pH 6.5-7.5 and at concentrations between 1 uM and 167 uM. Forms polar foci upon overexpression in E.coli. In terms of biological role, incorrect positioning (aggregation) of carboxysomes results in reduced CO(2) fixation by encapsulated RuBisCO, which leads to slower growth, cell elongation, asymmetric cell division and an increase in RuBisCO levels. The polypeptide is Maintenance of carboxysome distribution protein B (Synechococcus elongatus (strain ATCC 33912 / PCC 7942 / FACHB-805) (Anacystis nidulans R2)).